A 57-amino-acid polypeptide reads, in one-letter code: Small ribosomal subunit protein bS21 (57 aa).

The tract at residues 34–57 (RKEHYIKPSVQKKNRQKNMRSKKR) is disordered. Residues 43-57 (VQKKNRQKNMRSKKR) show a composition bias toward basic residues.

It belongs to the bacterial ribosomal protein bS21 family.

The sequence is that of Small ribosomal subunit protein bS21 from Aster yellows witches'-broom phytoplasma (strain AYWB).